A 212-amino-acid chain; its full sequence is Octanoyltransferase (212 aa).

In terms of domain architecture, BPL/LPL catalytic spans 31 to 209 (AETQDEIWLV…HFADLLGYNI (179 aa)). Substrate contacts are provided by residues 70–77 (RGGQITYH), 138–140 (SLG), and 151–153 (GLA). The Acyl-thioester intermediate role is filled by cysteine 169.

Belongs to the LipB family.

The protein localises to the cytoplasm. The catalysed reaction is octanoyl-[ACP] + L-lysyl-[protein] = N(6)-octanoyl-L-lysyl-[protein] + holo-[ACP] + H(+). It functions in the pathway protein modification; protein lipoylation via endogenous pathway; protein N(6)-(lipoyl)lysine from octanoyl-[acyl-carrier-protein]: step 1/2. Its function is as follows. Catalyzes the transfer of endogenously produced octanoic acid from octanoyl-acyl-carrier-protein onto the lipoyl domains of lipoate-dependent enzymes. Lipoyl-ACP can also act as a substrate although octanoyl-ACP is likely to be the physiological substrate. In Haemophilus influenzae (strain PittEE), this protein is Octanoyltransferase.